The following is a 234-amino-acid chain: Ubiquinone biosynthesis O-methyltransferase (234 aa).

S-adenosyl-L-methionine contacts are provided by Arg-39, Gly-59, Asp-80, and Met-124.

The protein belongs to the methyltransferase superfamily. UbiG/COQ3 family.

The enzyme catalyses a 3-demethylubiquinol + S-adenosyl-L-methionine = a ubiquinol + S-adenosyl-L-homocysteine + H(+). It catalyses the reaction a 3-(all-trans-polyprenyl)benzene-1,2-diol + S-adenosyl-L-methionine = a 2-methoxy-6-(all-trans-polyprenyl)phenol + S-adenosyl-L-homocysteine + H(+). It participates in cofactor biosynthesis; ubiquinone biosynthesis. In terms of biological role, O-methyltransferase that catalyzes the 2 O-methylation steps in the ubiquinone biosynthetic pathway. The chain is Ubiquinone biosynthesis O-methyltransferase from Aliivibrio fischeri (strain MJ11) (Vibrio fischeri).